Consider the following 274-residue polypeptide: MEFLTSGKVKDLYDVDESTLLFKFSDRVSAYDVKFKQDIPRKGEVLCKFAEFWFNELDVPNHFIKRESENEILVKKMKMLPIECVVRGYFYGSLVSRWKKGEVQVPEGTNTTLAAQLPEPIFDPTTKSEHDIPIDKNKAIEMNLVSEEQYNWLEKTSIEIYKKMAKITDDVGFILADLKLEFGILDDQITLGDSIGPDEYRLWPKDSFEVGKIQEAYDKQLLRDWLTANGYQKQFDDARDNGQEPIPPNIPSEIISKMTERYVTAYEKISGKSL.

This sequence belongs to the SAICAR synthetase family.

It catalyses the reaction 5-amino-1-(5-phospho-D-ribosyl)imidazole-4-carboxylate + L-aspartate + ATP = (2S)-2-[5-amino-1-(5-phospho-beta-D-ribosyl)imidazole-4-carboxamido]succinate + ADP + phosphate + 2 H(+). The protein operates within purine metabolism; IMP biosynthesis via de novo pathway; 5-amino-1-(5-phospho-D-ribosyl)imidazole-4-carboxamide from 5-amino-1-(5-phospho-D-ribosyl)imidazole-4-carboxylate: step 1/2. This is Phosphoribosylaminoimidazole-succinocarboxamide synthase from Nitrosopumilus maritimus (strain SCM1).